A 396-amino-acid polypeptide reads, in one-letter code: Glycerate kinase (396 aa).

The protein belongs to the glycerate kinase type-2 family.

Its subcellular location is the cytoplasm. The enzyme catalyses (R)-glycerate + ATP = (2R)-3-phosphoglycerate + ADP + H(+). This is Glycerate kinase (GLYCTK) from Macaca fascicularis (Crab-eating macaque).